The primary structure comprises 170 residues: Cathelicidin antimicrobial peptide (170 aa).

A signal peptide spans 1 to 30 (MKTQRDGHSLGGWSLMLLLLGLLMPLAIVA). A propeptide spans 31–131 (QVLSYKEAVL…DISCDKDNRR (101 aa)) (cathelin-like domain (CLD)). 2 disulfide bridges follow: Cys86-Cys97 and Cys108-Cys125. The interval 150–162 (FKRIVQRIKDFLQ) is active core.

It belongs to the cathelicidin family. As to quaternary structure, monomer, homodimer or homotrimer (in vitro). Oligomerizes as tetra- or hexamer in solution (in vitro). In terms of processing, proteolytically cleaved by proteinase PRTN3 into antibacterial peptide LL-37. Proteolytically cleaved by cathepsin CTSG and neutrophil elastase ELANE. Resistant to proteolytic degradation in solution, and when bound to both zwitterionic (mimicking mammalian membranes) and negatively charged membranes (mimicking bacterial membranes). Post-translationally, after secretion onto the skin surface, the CAMP gene product is processed by a serine protease-dependent mechanism into multiple novel antimicrobial peptides distinct from and shorter than cathelicidin LL-37. These peptides show enhanced antimicrobial action, acquiring the ability to kill skin pathogens such as S.aureus, E.coli and C.albicans. These peptides have lost the ability to stimulate CXCL8/IL8 release from keratinocytes. The peptides act synergistically, killing bacteria at lower concentrations when present together, and maintain activity at increased salt condition.

The protein resides in the secreted. It localises to the vesicle. Functionally, antimicrobial protein that is an integral component of the innate immune system. Binds to bacterial lipopolysaccharides (LPS). Acts via neutrophil N-formyl peptide receptors to enhance the release of CXCL2. Postsecretory processing generates multiple cathelicidin antimicrobial peptides with various lengths which act as a topical antimicrobial defense in sweat on skin. The unprocessed precursor form, cathelicidin antimicrobial peptide, inhibits the growth of Gram-negative E.coli and E.aerogenes with efficiencies comparable to that of the mature peptide LL-37 (in vitro). Its function is as follows. Antimicrobial peptide that is an integral component of the innate immune system. Binds to bacterial lipopolysaccharides (LPS). Causes membrane permeabilization by forming transmembrane pores (in vitro). Causes lysis of E.coli. Exhibits antimicrobial activity against Gram-negative bacteria such as P.aeruginosa, S.typhimurium, E.aerogenes, E.coli and P.syringae, Gram-positive bacteria such as L.monocytogenes, S.epidermidis, S.pyogenes and S.aureus, as well as vancomycin-resistant enterococci (in vitro). Exhibits antimicrobial activity against methicillin-resistant S.aureus, P.mirabilis, and C.albicans in low-salt media, but not in media containing 100 mM NaCl (in vitro). Forms chiral supramolecular assemblies with quinolone signal (PQS) molecules of P.aeruginosa, which may lead to interference of bacterial quorum signaling and perturbance of bacterial biofilm formation. May form supramolecular fiber-like assemblies on bacterial membranes. Induces cytokine and chemokine producation as well as TNF/TNFA and CSF2/GMCSF production in normal human keratinocytes. Exhibits hemolytic activity against red blood cells. Exhibits antimicrobial activity against E.coli and B.megaterium (in vitro). In Hylobates moloch (Silvery gibbon), this protein is Cathelicidin antimicrobial peptide.